The following is a 194-amino-acid chain: Dephospho-CoA kinase (194 aa).

Residues 4 to 194 (VIGLTGSIGM…VKEILQKLGA (191 aa)) enclose the DPCK domain. 12–17 (GMGKTT) contacts ATP.

Belongs to the CoaE family.

It is found in the cytoplasm. It catalyses the reaction 3'-dephospho-CoA + ATP = ADP + CoA + H(+). It functions in the pathway cofactor biosynthesis; coenzyme A biosynthesis; CoA from (R)-pantothenate: step 5/5. Catalyzes the phosphorylation of the 3'-hydroxyl group of dephosphocoenzyme A to form coenzyme A. The protein is Dephospho-CoA kinase of Agrobacterium fabrum (strain C58 / ATCC 33970) (Agrobacterium tumefaciens (strain C58)).